The primary structure comprises 231 residues: Heptaprenylglyceryl phosphate synthase (231 aa).

Lys12 contributes to the sn-glycerol 1-phosphate binding site. Mg(2+) is bound by residues Asp14 and Thr40. Sn-glycerol 1-phosphate contacts are provided by residues 159-164 (YLEYSG), Gly189, and 209-210 (GN).

The protein belongs to the GGGP/HepGP synthase family. Group I subfamily. As to quaternary structure, homodimer. Mg(2+) is required as a cofactor.

It carries out the reaction sn-glycerol 1-phosphate + all-trans-heptaprenyl diphosphate = 3-heptaprenyl-sn-glycero-1-phosphate + diphosphate. It functions in the pathway membrane lipid metabolism; glycerophospholipid metabolism. Its function is as follows. Prenyltransferase that catalyzes in vivo the transfer of the heptaprenyl moiety of heptaprenyl pyrophosphate (HepPP; 35 carbon atoms) to the C3 hydroxyl of sn-glycerol-1-phosphate (G1P), producing heptaprenylglyceryl phosphate (HepGP). This reaction is an ether-bond-formation step in the biosynthesis of archaea-type G1P-based membrane lipids found in Bacillales. This chain is Heptaprenylglyceryl phosphate synthase, found in Staphylococcus haemolyticus (strain JCSC1435).